Here is a 1444-residue protein sequence, read N- to C-terminus: Adhesin P1 (1444 aa).

The signal sequence occupies residues 1–30; the sequence is MHQPKKRLAKKSWAFLTAALTLGVITGVGG. Disordered stretches follow at residues 231–283, 845–885, and 927–949; these read QSSF…EVER, IPFE…ALPN, and GDSNDQFNKDSEQKWDKTETNEG. Residues 240–257 show a composition bias toward basic and acidic residues; that stretch reads LQKDSPVKDSSKQGEKLS. Low complexity predominate over residues 258 to 272; sequence ETTASSMSSGMATST. 2 stretches are compositionally biased toward polar residues: residues 851-860 and 868-878; these read KPSNNSTPFD and VTPSGGSSKPT. Over residues 933–946 the composition is skewed to basic and acidic residues; the sequence is FNKDSEQKWDKTET. The chain crosses the membrane as a helical span at residues 1353 to 1373; the sequence is VLPLIVTVPIVVIILSVTLGL. Residues 1419–1444 form a disordered region; that stretch reads NAPKKLKQATPTKPTPKTPPKPPVKQ. The span at 1431–1444 shows a compositional bias: pro residues; sequence KPTPKTPPKPPVKQ.

Belongs to the adhesin P1 family.

The protein localises to the cell membrane. Its function is as follows. The protein is the major adhesin mediating the attachment of this mycoplasma to the ciliated epithelium. This chain is Adhesin P1 (mgpA), found in Mycoplasma genitalium (strain ATCC 33530 / DSM 19775 / NCTC 10195 / G37) (Mycoplasmoides genitalium).